Consider the following 179-residue polypeptide: Proteasome chaperone 3 (179 aa).

Belongs to the PSMG3 family. As to quaternary structure, component of the 20S proteasome chaperone. Forms a heterodimer with POC4 that binds to proteasome precursors. Interacts with POP2.

In terms of biological role, involved in 20S proteasome assembly, facilitating the alpha-ring formation. This Saccharomyces cerevisiae (strain ATCC 204508 / S288c) (Baker's yeast) protein is Proteasome chaperone 3 (IRC25).